We begin with the raw amino-acid sequence, 256 residues long: Ubiquinone/menaquinone biosynthesis C-methyltransferase UbiE (256 aa).

Residues Thr79, Asp100, and 128-129 (DA) contribute to the S-adenosyl-L-methionine site.

It belongs to the class I-like SAM-binding methyltransferase superfamily. MenG/UbiE family.

The catalysed reaction is a 2-demethylmenaquinol + S-adenosyl-L-methionine = a menaquinol + S-adenosyl-L-homocysteine + H(+). The enzyme catalyses a 2-methoxy-6-(all-trans-polyprenyl)benzene-1,4-diol + S-adenosyl-L-methionine = a 5-methoxy-2-methyl-3-(all-trans-polyprenyl)benzene-1,4-diol + S-adenosyl-L-homocysteine + H(+). Its pathway is quinol/quinone metabolism; menaquinone biosynthesis; menaquinol from 1,4-dihydroxy-2-naphthoate: step 2/2. The protein operates within cofactor biosynthesis; ubiquinone biosynthesis. Functionally, methyltransferase required for the conversion of demethylmenaquinol (DMKH2) to menaquinol (MKH2) and the conversion of 2-polyprenyl-6-methoxy-1,4-benzoquinol (DDMQH2) to 2-polyprenyl-3-methyl-6-methoxy-1,4-benzoquinol (DMQH2). This Pseudomonas syringae pv. tomato (strain ATCC BAA-871 / DC3000) protein is Ubiquinone/menaquinone biosynthesis C-methyltransferase UbiE.